The sequence spans 132 residues: Pro-MCH 1 (132 aa).

The signal sequence occupies residues 1 to 24 (MRHYVLSISFAVALFLECYTPSTA). Cys-120 and Cys-129 are oxidised to a cystine.

Belongs to the melanin-concentrating hormone family. In terms of tissue distribution, pituitary gland. Produced in neurons of lateral basal hypothalamus which project both to the brain and to the neural lobe of the pituitary gland from where MCH is released.

Functionally, plays a role in skin pigmentation by antagonizing the action of melanotropin alpha. Induces melanin concentration within the melanophores. May participate in the control of the hypothalamo-pituitary adrenal gland axis by inhibiting the release of ACTH. The sequence is that of Pro-MCH 1 (mch1) from Oncorhynchus keta (Chum salmon).